Consider the following 396-residue polypeptide: Tyrosine--tRNA ligase (396 aa).

The short motif at 43 to 52 is the 'HIGH' region element; that stretch reads PTAPDIHLGH. Positions 227-231 match the 'KMSKS' region motif; the sequence is KMSKS. Lys230 lines the ATP pocket. Residues 335–395 form the S4 RNA-binding domain; it reads IGLATLLKEA…GKRKFARVTV (61 aa).

Belongs to the class-I aminoacyl-tRNA synthetase family. TyrS type 2 subfamily. In terms of assembly, homodimer.

The protein localises to the cytoplasm. The enzyme catalyses tRNA(Tyr) + L-tyrosine + ATP = L-tyrosyl-tRNA(Tyr) + AMP + diphosphate + H(+). Functionally, catalyzes the attachment of tyrosine to tRNA(Tyr) in a two-step reaction: tyrosine is first activated by ATP to form Tyr-AMP and then transferred to the acceptor end of tRNA(Tyr). The polypeptide is Tyrosine--tRNA ligase (Haemophilus ducreyi (strain 35000HP / ATCC 700724)).